A 192-amino-acid polypeptide reads, in one-letter code: 21.7 kDa class VI heat shock protein (192 aa).

A sHSP domain is found at 80–192 (SLRSLGQCRV…IPKINSKNKF (113 aa)).

It belongs to the small heat shock protein (HSP20) family. As to quaternary structure, may form oligomeric structures.

Its subcellular location is the cytoplasm. This chain is 21.7 kDa class VI heat shock protein (HSP21.7), found in Arabidopsis thaliana (Mouse-ear cress).